Consider the following 372-residue polypeptide: tRNA 2-selenouridine synthase (372 aa).

Residues 17–140 (FLQDIPLIDV…LRNFLLTTLE (124 aa)) enclose the Rhodanese domain. The active-site S-selanylcysteine intermediate is Cys100.

It belongs to the SelU family. Monomer.

It catalyses the reaction 5-methylaminomethyl-2-thiouridine(34) in tRNA + selenophosphate + (2E)-geranyl diphosphate + H2O + H(+) = 5-methylaminomethyl-2-selenouridine(34) in tRNA + (2E)-thiogeraniol + phosphate + diphosphate. The enzyme catalyses 5-methylaminomethyl-2-thiouridine(34) in tRNA + (2E)-geranyl diphosphate = 5-methylaminomethyl-S-(2E)-geranyl-thiouridine(34) in tRNA + diphosphate. It carries out the reaction 5-methylaminomethyl-S-(2E)-geranyl-thiouridine(34) in tRNA + selenophosphate + H(+) = 5-methylaminomethyl-2-(Se-phospho)selenouridine(34) in tRNA + (2E)-thiogeraniol. The catalysed reaction is 5-methylaminomethyl-2-(Se-phospho)selenouridine(34) in tRNA + H2O = 5-methylaminomethyl-2-selenouridine(34) in tRNA + phosphate. Involved in the post-transcriptional modification of the uridine at the wobble position (U34) of tRNA(Lys), tRNA(Glu) and tRNA(Gln). Catalyzes the conversion of 2-thiouridine (S2U-RNA) to 2-selenouridine (Se2U-RNA). Acts in a two-step process involving geranylation of 2-thiouridine (S2U) to S-geranyl-2-thiouridine (geS2U) and subsequent selenation of the latter derivative to 2-selenouridine (Se2U) in the tRNA chain. The polypeptide is tRNA 2-selenouridine synthase (Serratia proteamaculans (strain 568)).